The following is a 35-amino-acid chain: Bacteriocin SRCAM 1580 (35 aa).

The protein belongs to the bacteriocin class IIA/YGNGV family.

Its subcellular location is the secreted. In terms of biological role, bacteriocin with antibacterial activity against C.jejuni. This is Bacteriocin SRCAM 1580 from Niallia circulans (Bacillus circulans).